The sequence spans 193 residues: Ion-translocating oxidoreductase complex subunit A (193 aa).

A run of 6 helical transmembrane segments spans residues 5–25 (LLLLIGTVLVNNFVLVKFLGL), 39–59 (IGMGLATTFVLTLASVCSYLV), 67–87 (LGIEYLRTMSFILVIAVVVQF), 102–122 (VLGIFLPLITTNCAVLGVALL), 134–154 (IIYGFGAAVGFSLVLILFSAM), and 171–191 (SIAMITAGLMSLAFMGFTGLV).

This sequence belongs to the NqrDE/RnfAE family. In terms of assembly, the complex is composed of six subunits: RnfA, RnfB, RnfC, RnfD, RnfE and RnfG.

Its subcellular location is the cell inner membrane. Part of a membrane-bound complex that couples electron transfer with translocation of ions across the membrane. This Aliivibrio fischeri (strain ATCC 700601 / ES114) (Vibrio fischeri) protein is Ion-translocating oxidoreductase complex subunit A.